Here is a 494-residue protein sequence, read N- to C-terminus: Cysteine--tRNA ligase (494 aa).

Cys-29 contributes to the Zn(2+) binding site. The 'HIGH' region motif lies at 31–41; sequence LTVSDDAHLGH. The interval 187–220 is disordered; the sequence is KAGGVSPDDANTHRDDELPPLDGERGQTWASPWG. Basic and acidic residues predominate over residues 196–211; the sequence is ANTHRDDELPPLDGER. Zn(2+)-binding residues include Cys-230, His-255, and Glu-259. A 'KMSKS' region motif is present at residues 287–291; the sequence is KMSSS.

This sequence belongs to the class-I aminoacyl-tRNA synthetase family. The cofactor is Zn(2+).

The protein resides in the cytoplasm. It carries out the reaction tRNA(Cys) + L-cysteine + ATP = L-cysteinyl-tRNA(Cys) + AMP + diphosphate. This Halobacterium salinarum (strain ATCC 700922 / JCM 11081 / NRC-1) (Halobacterium halobium) protein is Cysteine--tRNA ligase.